Reading from the N-terminus, the 267-residue chain is MSNKVHLGHTARKRFGQNFLTDHNVINRIVGAISPDNDHVMVEIGPGLAALTEPVANAIDKLTVVELDKDLVARLQEHPTLKDKLDIHQGDALQFDFSQLVEEGRQMKVFGNLPYNISTPLMFHLFEFAEQIENMHFMLQKEVVLRLSASPGTKAYGRLTVMAQYHCQVMPVLEVPPGSFTPPPKVDSAVVRLVPYKVKPWPCKDVDQLRHLTTTAFNMRRKTLRNNLKHMISDEEFAELGIDATLRPEQITVEQYVAMANFVVDKQ.

S-adenosyl-L-methionine-binding residues include Asn18, Leu20, Gly45, Glu66, Asp91, and Asn112.

Belongs to the class I-like SAM-binding methyltransferase superfamily. rRNA adenine N(6)-methyltransferase family. RsmA subfamily.

It is found in the cytoplasm. It catalyses the reaction adenosine(1518)/adenosine(1519) in 16S rRNA + 4 S-adenosyl-L-methionine = N(6)-dimethyladenosine(1518)/N(6)-dimethyladenosine(1519) in 16S rRNA + 4 S-adenosyl-L-homocysteine + 4 H(+). Its function is as follows. Specifically dimethylates two adjacent adenosines (A1518 and A1519) in the loop of a conserved hairpin near the 3'-end of 16S rRNA in the 30S particle. May play a critical role in biogenesis of 30S subunits. This is Ribosomal RNA small subunit methyltransferase A from Shewanella woodyi (strain ATCC 51908 / MS32).